The chain runs to 252 residues: uncharacterized protein (252 aa).

The helical transmembrane segment at 80-100 (LSVLVIGSTMFTHAGVLPVLA) threads the bilayer.

It localises to the host membrane. It is found in the virion. This is an uncharacterized protein from Acanthamoeba polyphaga mimivirus (APMV).